The primary structure comprises 177 residues: Ribosome maturation factor RimP (177 aa).

This sequence belongs to the RimP family.

Its subcellular location is the cytoplasm. Functionally, required for maturation of 30S ribosomal subunits. In Mycobacterium marinum (strain ATCC BAA-535 / M), this protein is Ribosome maturation factor RimP.